Consider the following 1060-residue polypeptide: DNA-directed RNA polymerase subunit beta (1060 aa).

The protein belongs to the RNA polymerase beta chain family. In plastids the minimal PEP RNA polymerase catalytic core is composed of four subunits: alpha, beta, beta', and beta''. When a (nuclear-encoded) sigma factor is associated with the core the holoenzyme is formed, which can initiate transcription.

The protein resides in the plastid. It localises to the chloroplast. It catalyses the reaction RNA(n) + a ribonucleoside 5'-triphosphate = RNA(n+1) + diphosphate. Its function is as follows. DNA-dependent RNA polymerase catalyzes the transcription of DNA into RNA using the four ribonucleoside triphosphates as substrates. This chain is DNA-directed RNA polymerase subunit beta, found in Calycanthus floridus var. glaucus (Eastern sweetshrub).